The chain runs to 487 residues: ATP synthase subunit beta (487 aa).

171–178 (GGAGVGKT) provides a ligand contact to ATP.

This sequence belongs to the ATPase alpha/beta chains family. F-type ATPases have 2 components, CF(1) - the catalytic core - and CF(0) - the membrane proton channel. CF(1) has five subunits: alpha(3), beta(3), gamma(1), delta(1), epsilon(1). CF(0) has three main subunits: a(1), b(2) and c(9-12). The alpha and beta chains form an alternating ring which encloses part of the gamma chain. CF(1) is attached to CF(0) by a central stalk formed by the gamma and epsilon chains, while a peripheral stalk is formed by the delta and b chains.

The protein localises to the cell membrane. It catalyses the reaction ATP + H2O + 4 H(+)(in) = ADP + phosphate + 5 H(+)(out). Produces ATP from ADP in the presence of a proton gradient across the membrane. The catalytic sites are hosted primarily by the beta subunits. This chain is ATP synthase subunit beta, found in Leifsonia xyli subsp. xyli (strain CTCB07).